A 379-amino-acid polypeptide reads, in one-letter code: Cysteine-rich receptor-like protein kinase 44 (379 aa).

Positions 56-336 (FSPYNHLGEG…VRMLNANSFT (281 aa)) constitute a Protein kinase domain. ATP-binding positions include 62–70 (LGEGGFGAV) and Lys84. Tyr129 carries the post-translational modification Phosphotyrosine. The Proton acceptor role is filled by Asp181. A Phosphoserine modification is found at Ser185. Position 223 is a phosphothreonine (Thr223). A Phosphotyrosine modification is found at Tyr231.

This sequence belongs to the protein kinase superfamily. Ser/Thr protein kinase family. CRK subfamily.

It catalyses the reaction L-seryl-[protein] + ATP = O-phospho-L-seryl-[protein] + ADP + H(+). The enzyme catalyses L-threonyl-[protein] + ATP = O-phospho-L-threonyl-[protein] + ADP + H(+). This chain is Cysteine-rich receptor-like protein kinase 44, found in Arabidopsis thaliana (Mouse-ear cress).